The chain runs to 299 residues: Protoheme IX farnesyltransferase (299 aa).

Transmembrane regions (helical) follow at residues 25–45 (IVSL…PDLA), 51–71 (LFGT…NHLI), 97–117 (ALAF…FLVN), 119–139 (LTAW…TAFL), 147–167 (IVLG…AVTG), 173–193 (AFLL…ALAL), 225–245 (FLLF…LLYL), and 275–295 (FGYS…DHYL).

Belongs to the UbiA prenyltransferase family. Protoheme IX farnesyltransferase subfamily.

It is found in the cell inner membrane. It carries out the reaction heme b + (2E,6E)-farnesyl diphosphate + H2O = Fe(II)-heme o + diphosphate. It functions in the pathway porphyrin-containing compound metabolism; heme O biosynthesis; heme O from protoheme: step 1/1. Its function is as follows. Converts heme B (protoheme IX) to heme O by substitution of the vinyl group on carbon 2 of heme B porphyrin ring with a hydroxyethyl farnesyl side group. This Nitrosococcus oceani (strain ATCC 19707 / BCRC 17464 / JCM 30415 / NCIMB 11848 / C-107) protein is Protoheme IX farnesyltransferase.